The chain runs to 750 residues: Polyribonucleotide nucleotidyltransferase (750 aa).

The Mg(2+) site is built by Asp519 and Asp525. One can recognise a KH domain in the interval Pro585–Ile644. In terms of domain architecture, S1 motif spans Gly656–Val728. The segment at Leu725–Glu750 is disordered. The segment covering Ala730–Glu750 has biased composition (acidic residues).

This sequence belongs to the polyribonucleotide nucleotidyltransferase family. Mg(2+) is required as a cofactor.

The protein resides in the cytoplasm. The catalysed reaction is RNA(n+1) + phosphate = RNA(n) + a ribonucleoside 5'-diphosphate. Its function is as follows. Involved in mRNA degradation. Catalyzes the phosphorolysis of single-stranded polyribonucleotides processively in the 3'- to 5'-direction. In Paenarthrobacter aurescens (strain TC1), this protein is Polyribonucleotide nucleotidyltransferase.